Consider the following 650-residue polypeptide: Epithelial sodium channel subunit gamma (650 aa).

The Cytoplasmic portion of the chain corresponds to 1–55 (MAPGEKIKAKIKKNLPVRGPQAPTIKDLMHWYCMNTNTHGCRRIVVSRGRLRRLL). The chain crosses the membrane as a helical span at residues 56–76 (WIAFTLTAVALIIWQCALLVF). Over 77 to 542 (SFYTVSVSIK…GGQLGLWMSC (466 aa)) the chain is Extracellular. 8 disulfide bridges follow: Cys-100/Cys-284, Cys-208/Cys-215, Cys-261/Cys-268, Cys-373/Cys-458, Cys-395/Cys-454, Cys-399/Cys-450, Cys-408/Cys-435, and Cys-410/Cys-424. The segment at 135 to 222 (RKRREAGSMP…SDCATYTFSS (88 aa)) is gating release of inhibition by proteolysis (GRIP); protease-sensitive region that is responsible for the proteolytic activation of the channel. Asn-210 carries an N-linked (GlcNAc...) asparagine glycan. The N-linked (GlcNAc...) asparagine glycan is linked to Asn-272. Residue Asn-498 is glycosylated (N-linked (GlcNAc...) asparagine). Residues 543–563 (SVVCVIEIIEVFFIDFFSIIA) form a helical membrane-spanning segment. The Cytoplasmic segment spans residues 564–650 (RRQWHKAKDW…LTDTQLTNEL (87 aa)). Residues 577–628 (RQTPPSTETPSSRQGQDNPALDTDDDLPTFTSAMRLPPAPGSTVPGTPPPRY) are disordered. The span at 579–593 (TPPSTETPSSRQGQD) shows a compositional bias: polar residues. Positions 624 to 628 (PPPRY) match the PY motif; mediates interaction, ubiquitination and inhibition by NEDD4 and NEDD4L motif. Residues 624 to 628 (PPPRY) carry the PY motif; recruits WW domain-containing proteins and is thereby required for ubiquitination and inhibition of the channel by NEDD4 and NEDD4L motif.

This sequence belongs to the amiloride-sensitive sodium channel (TC 1.A.6) family. SCNN1G subfamily. In terms of assembly, component of the heterotrimeric epithelial sodium channel (ENaC) composed of an alpha/SCNN1A, a beta/SCNN1B and a gamma/SCNN1G subunit. Interacts with WWP1 (via WW domains). Interacts with WWP2 (via WW domains); inhibits the channel. Interacts with the full-length immature form of PCSK9 (pro-PCSK9); inhibits ENaC by promoting its proteasomal degradation. Interacts with BPIFA1; the interaction is indirect via SCNN1B and inhibits the proteolytic maturation of SCNN1A and SCNN1G and the activation of ENaC. In terms of processing, phosphorylated on serine and threonine residues. Aldosterone and insulin increase the basal level of phosphorylation. Post-translationally, ubiquitinated. Can be ubiquitinated at multiple sites and undergo monoubiquitination and polyubiquitination. Ubiquitination by NEDD4 or NEDD4L inhibits the ENaC channel through endocytosis, intracellular retention and degradation of its individual subunits. ENaC is activated through the proteolytic maturation of its subunits. Furin cleaves the SCNN1G subunit first, followed by cleavage by prostasin (PRSS8), which results in a stepwise increase in the open probability of the channel due to the release of an inhibitory tract. BPIFA1, which is recruited by the SCNN1B subunit, prevents the proteolytic activation of ENaC. In terms of processing, N-glycosylated. N-linked glycans are processed to complex type during ENaC complex assembly and transport to the plasma membrane.

The protein localises to the apical cell membrane. It catalyses the reaction Na(+)(in) = Na(+)(out). With respect to regulation, originally identified and characterized by its inhibition by the diuretic drug amiloride. Functionally, this is one of the three pore-forming subunits of the heterotrimeric epithelial sodium channel (ENaC), a critical regulator of sodium balance and fluid homeostasis. ENaC operates in epithelial tissues, where it mediates the electrodiffusion of sodium ions from extracellular fluid through the apical membrane of cells, with water following osmotically. It plays a key role in maintaining sodium homeostasis through electrogenic sodium reabsorption in the kidneys. Additionally, ENaC is essential for airway surface liquid homeostasis, which is crucial for proper mucus clearance. The protein is Epithelial sodium channel subunit gamma of Rattus norvegicus (Rat).